A 281-amino-acid chain; its full sequence is Probable endonuclease 4 (281 aa).

Residues histidine 69, histidine 109, glutamate 145, aspartate 179, histidine 182, histidine 216, aspartate 229, histidine 231, and glutamate 261 each coordinate Zn(2+).

The protein belongs to the AP endonuclease 2 family. Zn(2+) serves as cofactor.

The enzyme catalyses Endonucleolytic cleavage to 5'-phosphooligonucleotide end-products.. Its function is as follows. Endonuclease IV plays a role in DNA repair. It cleaves phosphodiester bonds at apurinic or apyrimidinic (AP) sites, generating a 3'-hydroxyl group and a 5'-terminal sugar phosphate. This is Probable endonuclease 4 from Glaesserella parasuis serovar 5 (strain SH0165) (Haemophilus parasuis).